We begin with the raw amino-acid sequence, 54 residues long: Large ribosomal subunit protein bL32c (54 aa).

This sequence belongs to the bacterial ribosomal protein bL32 family.

The protein resides in the plastid. The protein localises to the chloroplast. This is Large ribosomal subunit protein bL32c from Lactuca sativa (Garden lettuce).